A 248-amino-acid chain; its full sequence is Ubiquinone biosynthesis O-methyltransferase (248 aa).

Residues Arg-40, Gly-71, Asp-92, and Met-135 each contribute to the S-adenosyl-L-methionine site.

The protein belongs to the methyltransferase superfamily. UbiG/COQ3 family.

It carries out the reaction a 3-demethylubiquinol + S-adenosyl-L-methionine = a ubiquinol + S-adenosyl-L-homocysteine + H(+). The enzyme catalyses a 3-(all-trans-polyprenyl)benzene-1,2-diol + S-adenosyl-L-methionine = a 2-methoxy-6-(all-trans-polyprenyl)phenol + S-adenosyl-L-homocysteine + H(+). It functions in the pathway cofactor biosynthesis; ubiquinone biosynthesis. O-methyltransferase that catalyzes the 2 O-methylation steps in the ubiquinone biosynthetic pathway. This is Ubiquinone biosynthesis O-methyltransferase from Dinoroseobacter shibae (strain DSM 16493 / NCIMB 14021 / DFL 12).